The sequence spans 389 residues: Major outer membrane porin (389 aa).

It belongs to the chlamydial porin (CP) (TC 1.B.2) family. In terms of assembly, part of a disulfide cross-linked outer membrane complex (COMC) composed of the major outer membrane porin (MOMP), the small cysteine-rich protein (OmcA) and the large cysteine-rich periplasmic protein (OmcB).

It localises to the cell outer membrane. Its function is as follows. In elementary bodies (EBs, the infectious stage, which is able to survive outside the host cell) provides the structural integrity of the outer envelope through disulfide cross-links with the small cysteine-rich protein and the large cysteine-rich periplasmic protein. It has been described in publications as the Sarkosyl-insoluble COMC (Chlamydia outer membrane complex), and serves as the functional equivalent of peptidoglycan. Permits diffusion of specific solutes through the outer membrane. This chain is Major outer membrane porin (ompA), found in Chlamydia pneumoniae (Chlamydophila pneumoniae).